We begin with the raw amino-acid sequence, 356 residues long: MSTVTITDLARENVRNLTPYQSARRLGGNGDVWLNANEYPTAVEFQLTQQTLNRYPECQPKAVIENYAQYAGVKPEQVLVSRGADEGIELLIRAFCEPGKDAILYCPPTYGMYSVSAETIGVECRTVPTLENWQLDLQGISDKLDGVKVVYVCSPNNPTGQLINPQDFRTLLELTRGKAIVVADEAYIEFCPQASLAGWLAEYPHLAILRTLSKAFALAGLRCGFTLANEEVINLLMKVIAPYPLSTPVADIAAQALSPQGIIAMRERVAQIIAEREYLIAALKEIPCVEQVFDSETNYILARFKASSAVFKSLWDQGIILRDQNKQPSLSGCLRITVGTREESQRVIDALRAEQV.

Residue Lys214 is modified to N6-(pyridoxal phosphate)lysine.

This sequence belongs to the class-II pyridoxal-phosphate-dependent aminotransferase family. Histidinol-phosphate aminotransferase subfamily. In terms of assembly, homodimer. Pyridoxal 5'-phosphate is required as a cofactor.

It catalyses the reaction L-histidinol phosphate + 2-oxoglutarate = 3-(imidazol-4-yl)-2-oxopropyl phosphate + L-glutamate. It functions in the pathway amino-acid biosynthesis; L-histidine biosynthesis; L-histidine from 5-phospho-alpha-D-ribose 1-diphosphate: step 7/9. The protein is Histidinol-phosphate aminotransferase (hisC) of Escherichia coli O157:H7.